Here is a 249-residue protein sequence, read N- to C-terminus: Enolase-phosphatase E1 (249 aa).

This sequence belongs to the HAD-like hydrolase superfamily. MasA/MtnC family. In terms of assembly, monomer. Requires Mg(2+) as cofactor.

It catalyses the reaction 5-methylsulfanyl-2,3-dioxopentyl phosphate + H2O = 1,2-dihydroxy-5-(methylsulfanyl)pent-1-en-3-one + phosphate. The protein operates within amino-acid biosynthesis; L-methionine biosynthesis via salvage pathway; L-methionine from S-methyl-5-thio-alpha-D-ribose 1-phosphate: step 3/6. It participates in amino-acid biosynthesis; L-methionine biosynthesis via salvage pathway; L-methionine from S-methyl-5-thio-alpha-D-ribose 1-phosphate: step 4/6. Its function is as follows. Bifunctional enzyme that catalyzes the enolization of 2,3-diketo-5-methylthiopentyl-1-phosphate (DK-MTP-1-P) into the intermediate 2-hydroxy-3-keto-5-methylthiopentenyl-1-phosphate (HK-MTPenyl-1-P), which is then dephosphorylated to form the acireductone 1,2-dihydroxy-3-keto-5-methylthiopentene (DHK-MTPene). The chain is Enolase-phosphatase E1 from Synechococcus sp. (strain RCC307).